We begin with the raw amino-acid sequence, 414 residues long: DNA primase small subunit PriS (414 aa).

Active-site residues include Asp98, Asp100, and Asp312.

This sequence belongs to the eukaryotic-type primase small subunit family. In terms of assembly, heterodimer of a small subunit (PriS) and a large subunit (PriL). It depends on Mg(2+) as a cofactor. Mn(2+) serves as cofactor.

Catalytic subunit of DNA primase, an RNA polymerase that catalyzes the synthesis of short RNA molecules used as primers for DNA polymerase during DNA replication. The small subunit contains the primase catalytic core and has DNA synthesis activity on its own. Binding to the large subunit stabilizes and modulates the activity, increasing the rate of DNA synthesis while decreasing the length of the DNA fragments, and conferring RNA synthesis capability. The DNA polymerase activity may enable DNA primase to also catalyze primer extension after primer synthesis. May also play a role in DNA repair. This is DNA primase small subunit PriS from Methanosarcina mazei (strain ATCC BAA-159 / DSM 3647 / Goe1 / Go1 / JCM 11833 / OCM 88) (Methanosarcina frisia).